The primary structure comprises 1103 residues: A disintegrin and metalloproteinase with thrombospondin motifs 10 (1103 aa).

The signal sequence occupies residues 1 to 25; sequence MAPACQILRWALALGLGLMFEVTHA. The propeptide occupies 26-233; it reads FRSQDEFLSS…TERGQPGLKR (208 aa). Asn-90, Asn-222, and Asn-323 each carry an N-linked (GlcNAc...) asparagine glycan. The interval 213 to 233 is disordered; it reads KPPPARPLGNETERGQPGLKR. The 219-residue stretch at 239 to 457 folds into the Peptidase M12B domain; sequence RYVETLVVAD…GLGLCLNNRP (219 aa). Disulfide bonds link Cys-315–Cys-376, Cys-351–Cys-358, Cys-370–Cys-452, Cys-409–Cys-436, Cys-479–Cys-501, Cys-490–Cys-508, Cys-496–Cys-531, Cys-521–Cys-536, Cys-559–Cys-596, Cys-563–Cys-601, and Cys-574–Cys-586. His-392 lines the Zn(2+) pocket. Glu-393 is an active-site residue. The Zn(2+) site is built by His-396 and His-402. The region spanning 460–546 is the Disintegrin domain; sequence QDFVYPTVAP…VPFGSRPEGV (87 aa). Positions 547-602 constitute a TSP type-1 1 domain; it reads DGAWGPWTPWGDCSRTCGGGVSSSSRHCDSPRPTIGGKYCLGERRRHRSCNTDDCP. The segment at 706–828 is spacer; the sequence is ETIEGVFSPA…IARDSLPPYS (123 aa). Residues Asn-740 and Asn-795 are each glycosylated (N-linked (GlcNAc...) asparagine). TSP type-1 domains lie at 825–883, 884–945, 947–1001, and 1003–1058; these read PPYS…NTEP, CPPD…PTCP, EWAA…NLRR, and PPAR…AKCD. Residue Asn-892 is glycosylated (N-linked (GlcNAc...) asparagine). One can recognise a PLAC domain in the interval 1065–1103; sequence GPEECKDVNKVAYCPLVLKFQFCSRAYFRQMCCKTCHGH.

In terms of assembly, interacts with FBN1; this interaction promotes microfibrils assembly. Zn(2+) is required as a cofactor. Glycosylated. Can be O-fucosylated by POFUT2 on a serine or a threonine residue found within the consensus sequence C1-X(2)-(S/T)-C2-G of the TSP type-1 repeat domains where C1 and C2 are the first and second cysteine residue of the repeat, respectively. Fucosylated repeats can then be further glycosylated by the addition of a beta-1,3-glucose residue by the glucosyltransferase, B3GALTL. Fucosylation mediates the efficient secretion of ADAMTS family members. Can also be C-glycosylated with one or two mannose molecules on tryptophan residues within the consensus sequence W-X-X-W of the TPRs, and N-glycosylated. These other glycosylations can also facilitate secretion. Widely expressed in adult tissues.

It is found in the secreted. It localises to the extracellular space. The protein resides in the extracellular matrix. In terms of biological role, metalloprotease that participate in microfibrils assembly. Microfibrils are extracellular matrix components occurring independently or along with elastin in the formation of elastic tissues. This chain is A disintegrin and metalloproteinase with thrombospondin motifs 10 (ADAMTS10), found in Homo sapiens (Human).